Reading from the N-terminus, the 149-residue chain is Transcription factor MafF (149 aa).

The interval arginine 51 to lysine 76 is basic motif. The bZIP domain occupies arginine 51 to leucine 114. The segment at leucine 79–leucine 93 is leucine-zipper.

Belongs to the bZIP family. Maf subfamily. In terms of assembly, monomer and homo- or heterodimer. As to expression, highly expressed in the ovary, lower expression in the brain, heart and mesenterium.

Its subcellular location is the nucleus. Its function is as follows. Since it lacks a putative transactivation domain, it may behave as a transcriptional repressor when it dimerizes among itself. May also serve as a transcriptional activator by dimerizing with other (usually larger) basic-zipper proteins and recruiting them to specific DNA-binding sites. May be involved in the cellular stress response. This Gallus gallus (Chicken) protein is Transcription factor MafF (MAFF).